Reading from the N-terminus, the 549-residue chain is Acetyl-coenzyme A transporter 1 (549 aa).

Residues 1 to 12 show a composition bias toward basic and acidic residues; it reads MSPTISHKDSSR. Positions 1–46 are disordered; it reads MSPTISHKDSSRQRRPGNFSHSLDMKSGPLPPGGWDDSHLDSAGRE. Topologically, residues 1 to 74 are cytoplasmic; sequence MSPTISHKDS…PQSFRAELSS (74 aa). Residues Ser22 and Ser42 each carry the phosphoserine modification. Over residues 36-46 the composition is skewed to basic and acidic residues; it reads DDSHLDSAGRE. The helical transmembrane segment at 75–95 threads the bilayer; it reads ILLLLFLYVLQGIPLGLAGSI. The Extracellular segment spans residues 96 to 113; it reads PLILQSKNVSYTDQAFFS. Residue Asn103 is glycosylated (N-linked (GlcNAc...) asparagine). The chain crosses the membrane as a helical span at residues 114–134; the sequence is FVFWPFSLKLLWAPLVDAVYV. The Cytoplasmic segment spans residues 135 to 141; sequence KNFGRRK. A helical membrane pass occupies residues 142–162; that stretch reads SWLVPTQYILGLFMIYLSTQV. Topologically, residues 163 to 175 are extracellular; the sequence is DRLLGNTDDRTPD. The chain crosses the membrane as a helical span at residues 176-196; it reads VIALTVAFFLFEFLAATQDIA. At 197–217 the chain is on the cytoplasmic side; it reads VDGWALTMLSRENVGYASTCN. The helical transmembrane segment at 218-238 threads the bilayer; the sequence is SVGQTAGYFLGNVLFLALESA. At 239–256 the chain is on the extracellular side; sequence DFCNKYLRFQPQPRGIVT. The helical transmembrane segment at 257 to 277 threads the bilayer; sequence LSDFLFFWGTVFLITTTLVAL. Residues 278–299 are Cytoplasmic-facing; that stretch reads LKKENEVSVVKEETQGITDTYK. A helical membrane pass occupies residues 300-320; sequence LLFAIIKMPAVLTFCLLILTA. At 321 to 343 the chain is on the extracellular side; it reads KIGFSAADAVTGLKLVEEGVPKE. The helical transmembrane segment at 344–364 threads the bilayer; sequence HLALLAVPMVPLQIILPLIIS. Topologically, residues 365–378 are cytoplasmic; it reads KYTAGPQPLNTFYK. A helical membrane pass occupies residues 379–398; the sequence is AMPYRLLLGLEYALLVWWTP. Over 399–404 the chain is Extracellular; that stretch reads KVEHQG. The helical transmembrane segment at 405-425 threads the bilayer; sequence GFPIYYYIVVLLSYALHQVTV. Residues 426–508 lie on the Cytoplasmic side of the membrane; that stretch reads YSMYVSIMAF…LGGSCVTALD (83 aa). The chain crosses the membrane as a helical span at residues 509–529; it reads GYYVESIICVFIGFGWWFFLG. At 530–549 the chain is on the extracellular side; it reads PKFKKLQDEGSSSWKCKRNN.

Belongs to the SLC33A transporter family. In terms of assembly, homodimerizes. Ubiquitous. Detected in heart, brain, placenta, lung, liver, skeletal muscle, kidney and pancreas. With strongest signals in pancreas.

It is found in the endoplasmic reticulum membrane. It carries out the reaction acetyl-CoA(in) = acetyl-CoA(out). Acetyl-CoA transporter that mediates active acetyl-CoA import through the endoplasmic reticulum (ER) membrane into the ER lumen where specific ER-based acetyl-CoA:lysine acetyltransferases are responsible for the acetylation of ER-based protein substrates, such as BACE1. Necessary for O-acetylation of gangliosides. This is Acetyl-coenzyme A transporter 1 from Homo sapiens (Human).